The primary structure comprises 481 residues: Glutamate--tRNA ligase (481 aa).

Residues 11–21 (PSPTGLLHIGN) carry the 'HIGH' region motif. Positions 255 to 259 (KLSKR) match the 'KMSKS' region motif. Lys258 contacts ATP.

This sequence belongs to the class-I aminoacyl-tRNA synthetase family. Glutamate--tRNA ligase type 1 subfamily. As to quaternary structure, monomer.

Its subcellular location is the cytoplasm. It catalyses the reaction tRNA(Glu) + L-glutamate + ATP = L-glutamyl-tRNA(Glu) + AMP + diphosphate. Catalyzes the attachment of glutamate to tRNA(Glu) in a two-step reaction: glutamate is first activated by ATP to form Glu-AMP and then transferred to the acceptor end of tRNA(Glu). The polypeptide is Glutamate--tRNA ligase (Streptococcus pyogenes serotype M6 (strain ATCC BAA-946 / MGAS10394)).